We begin with the raw amino-acid sequence, 464 residues long: Na(+)/H(+) antiporter NhaA (464 aa).

12 helical membrane-spanning segments follow: residues 37 to 57 (GSGI…NTSC), 82 to 102 (IHYW…GLEI), 118 to 138 (VLPI…YFSF), 145 to 165 (VSGW…ILLL), 176 to 196 (AVLV…IAIF), 200 to 220 (NLAW…LLLN), 226 to 246 (ALWA…FSGV), 248 to 268 (ATVA…YSPT), 321 to 341 (ILNT…NAGV), 360 to 380 (VFFG…MICV), 396 to 416 (VLGI…VSEL), and 430 to 450 (ITIL…LRFI).

Belongs to the NhaA Na(+)/H(+) (TC 2.A.33) antiporter family.

The protein resides in the cell inner membrane. The enzyme catalyses Na(+)(in) + 2 H(+)(out) = Na(+)(out) + 2 H(+)(in). Its function is as follows. Na(+)/H(+) antiporter that extrudes sodium in exchange for external protons. The polypeptide is Na(+)/H(+) antiporter NhaA (Dichelobacter nodosus (strain VCS1703A)).